Reading from the N-terminus, the 216-residue chain is 3-keto-L-gulonate-6-phosphate decarboxylase UlaD (216 aa).

Substrate is bound at residue D11. Residues E33 and D62 each coordinate Mg(2+). A substrate-binding site is contributed by R192.

Belongs to the HPS/KGPDC family. KGPDC subfamily. In terms of assembly, homodimer. Mg(2+) serves as cofactor.

The catalysed reaction is 3-dehydro-L-gulonate 6-phosphate + H(+) = L-xylulose 5-phosphate + CO2. It participates in cofactor degradation; L-ascorbate degradation; D-xylulose 5-phosphate from L-ascorbate: step 2/4. Its function is as follows. Catalyzes the decarboxylation of 3-keto-L-gulonate-6-P into L-xylulose-5-P. Is involved in the anaerobic L-ascorbate utilization. In Escherichia coli O139:H28 (strain E24377A / ETEC), this protein is 3-keto-L-gulonate-6-phosphate decarboxylase UlaD.